We begin with the raw amino-acid sequence, 321 residues long: Beta-lactamase (321 aa).

The N-terminal stretch at 1–30 is a signal peptide; the sequence is MEKNRKKQIVVLSIALVCIFILVFSLFHKS. Ser83 functions as the Acyl-ester intermediate in the catalytic mechanism. 233–235 contributes to the substrate binding site; that stretch reads KTG.

The protein belongs to the class-A beta-lactamase family.

It carries out the reaction a beta-lactam + H2O = a substituted beta-amino acid. Inhibited by clavulanic acid. In terms of biological role, can hydrolyze cephalosporins, penicillins and also cefoxitin; but at a slow rate. The protein is Beta-lactamase (cfxA) of Phocaeicola vulgatus (Bacteroides vulgatus).